An 83-amino-acid polypeptide reads, in one-letter code: Sec-independent protein translocase protein TatA (83 aa).

A helical membrane pass occupies residues 2-22 (GLGGISIWQLLIVLVIVLLLF). Basic and acidic residues-rich tracts occupy residues 50–65 (AAKQ…KVAA) and 74–83 (AEQKEKTEAK). The segment at 50–83 (AAKQEAEEAEQKKVAAEEAAAAKTAEQKEKTEAK) is disordered.

The protein belongs to the TatA/E family. In terms of assembly, the Tat system comprises two distinct complexes: a TatABC complex, containing multiple copies of TatA, TatB and TatC subunits, and a separate TatA complex, containing only TatA subunits. Substrates initially bind to the TatABC complex, which probably triggers association of the separate TatA complex to form the active translocon.

Its subcellular location is the cell inner membrane. Its function is as follows. Part of the twin-arginine translocation (Tat) system that transports large folded proteins containing a characteristic twin-arginine motif in their signal peptide across membranes. TatA could form the protein-conducting channel of the Tat system. This chain is Sec-independent protein translocase protein TatA, found in Saccharophagus degradans (strain 2-40 / ATCC 43961 / DSM 17024).